The chain runs to 619 residues: MANKPKPSEHLRDLIRSGQRTSPEADLQLKQQQQPRQTQPSRPSSSLTQSYEPPGTTRVPVSPVISTSESSGSSRSPASSGSSRSSGSSGSSRLSGSSRASVNTIMNLSNIEFNDTPSVTDDSYYTNVMTESPIRKAASQRLPTGVMDSIRGSLENINVSHNLTPTTPLSKPNTLMYKKGAPAPPRLTPILPSYKTNLKPVVQTPKIQRKTSQIEEESDDDSSSQNNSSDQEEEEEEEEEEEEEEEEEEEEEEEEEEEEEEEEEEEEEEEEEEEEEEEEEEEEEEEVREAPKRSGGKPLPSPSLSSIFSNYDESSSVASSESSKQSRVKVSKKPSPLIKKKPAPIKKVTTPTRSKQQQQSPLPPTRRSPLPSEAKKPAASKKVSKNVLSSSSSSPSSSSSSSSSLTPTKSRRETIVTTPTKTPPSTRSKSITPLSTPTRTPPSTRSKTSSTPSSTPSSLSISTPSSTSISSPVSSRTSTSILTPPSTPTSTHSSTSASITTPTTPRIRVQRTTTTPTTPTTPRKKRRRRLVASVIRRLRNSVDFMIPRLPLSRLVREIMCLFDDGLRITPGALLAIQTTTEAYLTRLMEDSGLLASHAGRKTIRSVDMYAWKRARHFLF.

Over residues Met-1–Ile-15 the composition is skewed to basic and acidic residues. Disordered regions lie at residues Met-1–Arg-99 and Ile-190–Arg-526. 2 stretches are compositionally biased toward low complexity: residues Gln-28 to Ser-50 and Ser-66 to Arg-99. Residues Asp-230–Val-287 are compositionally biased toward acidic residues. Composition is skewed to low complexity over residues Gly-296 to Ser-306 and Ser-314 to Gln-325. Over residues Ser-326–Pro-344 the composition is skewed to basic residues. 3 stretches are compositionally biased toward low complexity: residues Ile-345–Ser-360, Lys-385–Thr-408, and Ile-415–Thr-521.

It belongs to the histone H3 family.

In Dictyostelium discoideum (Social amoeba), this protein is Histone H3.v1 (H3v1).